A 128-amino-acid chain; its full sequence is Small ribosomal subunit protein uS11 (128 aa).

Belongs to the universal ribosomal protein uS11 family. In terms of assembly, part of the 30S ribosomal subunit. Interacts with proteins S7 and S18. Binds to IF-3.

Functionally, located on the platform of the 30S subunit, it bridges several disparate RNA helices of the 16S rRNA. Forms part of the Shine-Dalgarno cleft in the 70S ribosome. The protein is Small ribosomal subunit protein uS11 of Ligilactobacillus salivarius (strain UCC118) (Lactobacillus salivarius).